Reading from the N-terminus, the 290-residue chain is Protoheme IX farnesyltransferase (290 aa).

The next 9 helical transmembrane spans lie at 8–28 (LTKPGIIMGNLISVLAGYFLA), 36–56 (LSLLVYTMLGVALVIASGCVV), 81–101 (INIEFAFLFAIIMLLIGTGLL), 108–128 (LSAVMVLLGYVFYVFFYTMWY), 133–153 (VYGTLVGSVSGAIPPLVGYLA), 163–183 (VLLFGLFCLWQMPHSYAIAMF), 209–229 (IMIYVLVFSVVALGLYAFGHT), 230–247 (GYEYLAVVAISCYGWFKV), and 270–290 (LAITAFSTVLGIELLPFSITF).

It belongs to the UbiA prenyltransferase family. Protoheme IX farnesyltransferase subfamily.

The protein resides in the cell inner membrane. It catalyses the reaction heme b + (2E,6E)-farnesyl diphosphate + H2O = Fe(II)-heme o + diphosphate. It functions in the pathway porphyrin-containing compound metabolism; heme O biosynthesis; heme O from protoheme: step 1/1. Its function is as follows. Converts heme B (protoheme IX) to heme O by substitution of the vinyl group on carbon 2 of heme B porphyrin ring with a hydroxyethyl farnesyl side group. This chain is Protoheme IX farnesyltransferase, found in Aliivibrio salmonicida (strain LFI1238) (Vibrio salmonicida (strain LFI1238)).